The sequence spans 360 residues: Glucan endo-1,3-beta-glucosidase B (360 aa).

An N-terminal signal peptide occupies residues 1–25 (MATSQIAIIVLLGLLVATNIHITEA). Position 26 is a pyrrolidone carboxylic acid (Q26). Catalysis depends on E120, which acts as the Proton donor. The Nucleophile role is filled by E265. A propeptide spans 341-360 (VSERVWDITNSTASSLTSEI) (removed in mature form). Residue N350 is glycosylated (N-linked (GlcNAc...) asparagine).

This sequence belongs to the glycosyl hydrolase 17 family.

It localises to the vacuole. The enzyme catalyses Hydrolysis of (1-&gt;3)-beta-D-glucosidic linkages in (1-&gt;3)-beta-D-glucans.. In terms of biological role, implicated in the defense of plants against pathogens. This is Glucan endo-1,3-beta-glucosidase B from Solanum lycopersicum (Tomato).